Consider the following 147-residue polypeptide: Hemoglobin subunit epsilon (147 aa).

The Globin domain occupies 3–147 (HFTAEEKSVI…VATALAHKYH (145 aa)). Serine 51 carries the post-translational modification Phosphoserine. Heme b-binding residues include histidine 64 and histidine 93.

This sequence belongs to the globin family. In terms of tissue distribution, red blood cells.

In terms of biological role, hemoglobin epsilon chain is a beta-type chain found in early embryos. In Sus scrofa (Pig), this protein is Hemoglobin subunit epsilon (HBE1).